Here is an 890-residue protein sequence, read N- to C-terminus: V-type proton ATPase subunit a, Golgi isoform (890 aa).

Methionine 1 is subject to N-acetylmethionine. Over 1–450 (MNQEEAIFRS…DAYGIATYKE (450 aa)) the chain is Cytoplasmic. Residues 113-154 (LENVNDMVKEITDCESRARQLDESLDSLRSKLNDLLEQRQVI) are a coiled coil. Residues serine 223 and serine 228 each carry the phosphoserine modification. A coiled-coil region spans residues 297–347 (LKKVKRVIDSLNGKIVSLNTRSSELVDTLNRQIDDLQRILDTTEQTLHTEL). A helical transmembrane segment spans residues 451–469 (INAGLATVVTFPFMFAIMF). Residues 470–471 (GD) lie on the Vacuolar side of the membrane. Residues 472-488 (MGHGFILFLMALFLVLN) traverse the membrane as a helical segment. At 489 to 502 (ERKFGAMHRDEIFD) the chain is on the cytoplasmic side. A helical membrane pass occupies residues 503-532 (MAFTGRYVLLLMGAFSVYTGLLYNDIFSKS). The Vacuolar segment spans residues 533-580 (MTIFKSGWQWPSTFRKGESIEAKKTGVYPFGLDFAWHGTDNGLLFSNS). A helical transmembrane segment spans residues 581–600 (YKMKLSILMGYAHMTYSFMF). Residues 601-618 (SYINYRAKNSKVDIIGNF) lie on the Cytoplasmic side of the membrane. A helical transmembrane segment spans residues 619 to 639 (IPGLVFMQSIFGYLSWAIVYK). Topologically, residues 640 to 682 (WSKDWIKDDKPAPGLLNMLINMFLAPGTIDDQLYSGQAKLQVV) are vacuolar. Residues 683–702 (LLLAALVCVPWLLLYKPLTL) form a helical membrane-spanning segment. At 703 to 779 (RRLNKNGGGG…DVMIHQVIHT (77 aa)) the chain is on the cytoplasmic side. The helical transmembrane segment at 780–804 (IEFCLNCISHTASYLRLWALSLAHA) threads the bilayer. Topologically, residues 805–828 (QLSSVLWDMTISNAFSSKNSGSPL) are vacuolar. Residues 829 to 867 (AVMKVVFLFAMWFVLTVCILVFMEGTSAMLHALRLHWVE) form a helical membrane-spanning segment. At 868-890 (AMSKFFEGEGYAYEPFSFRAIIE) the chain is on the cytoplasmic side.

Belongs to the V-ATPase 116 kDa subunit family. As to quaternary structure, V-ATPase is a heteromultimeric enzyme composed of a peripheral catalytic V1 complex (components A to H) attached to an integral membrane V0 proton pore complex (components: a, c, c', c'', d, e, f and VOA1). In terms of processing, glycosylated.

It is found in the endosome membrane. The protein resides in the golgi apparatus membrane. Its function is as follows. Subunit of the V0 complex of vacuolar(H+)-ATPase (V-ATPase), a multisubunit enzyme composed of a peripheral complex (V1) that hydrolyzes ATP and a membrane integral complex (V0) that translocates protons. V-ATPase is responsible for acidifying and maintaining the pH of intracellular compartments. Is present only in Golgi- and endosome-residing V-ATPase complexes; enzymes containing this subunit have a 4-fold lower ratio of proton transport to ATP hydrolysis than complexes containing the vacuolar isoform and do not dissociate V1 and V0 in response to glucose depletion. The protein is V-type proton ATPase subunit a, Golgi isoform (STV1) of Saccharomyces cerevisiae (strain ATCC 204508 / S288c) (Baker's yeast).